The following is a 507-amino-acid chain: Glutamate--tRNA ligase (507 aa).

Residues 14-24 carry the 'HIGH' region motif; it reads PSPTGYLHIGG. The 'KMSKS' region signature appears at 261–265; the sequence is KLSKR. Lys-264 provides a ligand contact to ATP.

The protein belongs to the class-I aminoacyl-tRNA synthetase family. Glutamate--tRNA ligase type 1 subfamily. As to quaternary structure, monomer.

It is found in the cytoplasm. It catalyses the reaction tRNA(Glu) + L-glutamate + ATP = L-glutamyl-tRNA(Glu) + AMP + diphosphate. Catalyzes the attachment of glutamate to tRNA(Glu) in a two-step reaction: glutamate is first activated by ATP to form Glu-AMP and then transferred to the acceptor end of tRNA(Glu). This Roseiflexus castenholzii (strain DSM 13941 / HLO8) protein is Glutamate--tRNA ligase.